A 1351-amino-acid chain; its full sequence is uncharacterized protein (1351 aa).

The segment covering 1-17 (MSKKDSKNSPKKSKDTN) has biased composition (basic and acidic residues). The segment at 1 to 31 (MSKKDSKNSPKKSKDTNSDESSSSNAETSSD) is disordered. Over residues 19-31 (DESSSSNAETSSD) the composition is skewed to low complexity.

This is an uncharacterized protein from Acanthamoeba polyphaga mimivirus (APMV).